The sequence spans 140 residues: uncharacterized protein (140 aa).

The next 2 helical transmembrane spans lie at 4–21 (ILKI…YLFG) and 26–48 (LVKV…SGYL).

The protein belongs to the bacteriophage holin family. Cp-1 holin subfamily.

Its subcellular location is the cell membrane. This is an uncharacterized protein from Listeria innocua serovar 6a (strain ATCC BAA-680 / CLIP 11262).